A 489-amino-acid chain; its full sequence is Betaine aldehyde dehydrogenase (489 aa).

Thr-26 and Asp-93 together coordinate K(+). 150-152 (GAW) provides a ligand contact to NAD(+). The active-site Charge relay system is the Lys-162. Residue 176-179 (KPSE) participates in NAD(+) binding. Val-180 contacts K(+). NAD(+) is bound at residue 229–232 (GVET). Leu-245 contacts K(+). The active-site Proton acceptor is the Glu-251. Residues Gly-253, Cys-285, and Glu-386 each contribute to the NAD(+) site. The active-site Nucleophile is Cys-285. Cys-285 carries the cysteine sulfenic acid (-SOH) modification. 2 residues coordinate K(+): Lys-456 and Gly-459. Glu-463 (charge relay system) is an active-site residue.

The protein belongs to the aldehyde dehydrogenase family. Dimer of dimers. It depends on K(+) as a cofactor.

The catalysed reaction is betaine aldehyde + NAD(+) + H2O = glycine betaine + NADH + 2 H(+). It functions in the pathway amine and polyamine biosynthesis; betaine biosynthesis via choline pathway; betaine from betaine aldehyde: step 1/1. In terms of biological role, involved in the biosynthesis of the osmoprotectant glycine betaine. Catalyzes the irreversible oxidation of betaine aldehyde to the corresponding acid. The polypeptide is Betaine aldehyde dehydrogenase (Burkholderia multivorans (strain ATCC 17616 / 249)).